The following is a 669-amino-acid chain: PDF receptor (669 aa).

Topologically, residues 1-244 are extracellular; it reads MTLLSNILDC…DIARRTRTLE (244 aa). The segment at 24–52 is disordered; the sequence is RQSGSSGPSPSAPTAGTFESKSMLEPTSS. Positions 26–40 are enriched in low complexity; sequence SGSSGPSPSAPTAGT. Asn-111, Asn-117, Asn-130, Asn-137, Asn-148, and Asn-198 each carry an N-linked (GlcNAc...) asparagine glycan. The helical transmembrane segment at 245–265 threads the bilayer; the sequence is IVGLCLSLFALIVSLLIFCTF. Residues 266 to 274 lie on the Cytoplasmic side of the membrane; that stretch reads RSLRNNRTK. The helical transmembrane segment at 275 to 295 threads the bilayer; that stretch reads IHKNLFVAMVLQVIIRLTLYL. The Extracellular segment spans residues 296-334; the sequence is DQFRRGNKEAATNTSLSVIENTPYLCEASYVLLEYARTA. A glycan (N-linked (GlcNAc...) asparagine) is linked at Asn-308. A helical membrane pass occupies residues 335–355; the sequence is MFMWMFIEGLYLHNMVTVAVF. Topologically, residues 356–366 are cytoplasmic; sequence QGSFPLKFFSR. Residues 367 to 387 form a helical membrane-spanning segment; that stretch reads LGWCVPILMTTVWARCTVMYM. Over 388–411 the chain is Extracellular; that stretch reads DTSLGECLWNYNLTPYYWILEGPR. A helical transmembrane segment spans residues 412 to 432; that stretch reads LAVILLNFCFLVNIIRVLVMK. The Cytoplasmic portion of the chain corresponds to 433–449; sequence LRQSQASDIEQTRKAVR. The helical transmembrane segment at 450 to 470 threads the bilayer; that stretch reads AAIVLLPLLGITNLLHQLAPL. Topologically, residues 471 to 480 are extracellular; the sequence is KTATNFAVWS. A helical transmembrane segment spans residues 481 to 501; it reads YGTHFLTSFQGFFIALIYCFL. Residues 502 to 669 are Cytoplasmic-facing; the sequence is NGEVRAVLLK…ESVVFELSEQ (168 aa). 2 disordered regions span residues 536–573 and 590–614; these read AYNT…KPSS and PRLQ…AEPD. Residues 595–609 show a composition bias toward basic and acidic residues; the sequence is KAREKGKDRVEKTDA.

It belongs to the G-protein coupled receptor 2 family. Mainly present in clock neurons of the brain. Localizes in all 4 s-LNv neurons, 1 LNd neuron, 7 DN1 neurons, and 1 DN3 neuron. In addition to the clock neurons, it is also present in approximately 13 pairs of neurons along the ventral nerve cord in third instar larvae, which do not overlap with dopaminergic or serotonergic neurons. Not present in DN2 neurons (at protein level).

The protein resides in the cell membrane. In terms of biological role, receptor for PDF, a neuropeptide controlling circadian behavioral rhythms. Probably regulates circadian behavioral rhythms through coordination of activities of clock neurons. PDF-binding results in the elevation of cAMP synthesis. Plays a role in sleep regulation and regulates the state transition from sleep to wake. This chain is PDF receptor, found in Drosophila melanogaster (Fruit fly).